Reading from the N-terminus, the 90-residue chain is Probable Fe(2+)-trafficking protein (90 aa).

This sequence belongs to the Fe(2+)-trafficking protein family.

In terms of biological role, could be a mediator in iron transactions between iron acquisition and iron-requiring processes, such as synthesis and/or repair of Fe-S clusters in biosynthetic enzymes. This is Probable Fe(2+)-trafficking protein from Aeromonas hydrophila subsp. hydrophila (strain ATCC 7966 / DSM 30187 / BCRC 13018 / CCUG 14551 / JCM 1027 / KCTC 2358 / NCIMB 9240 / NCTC 8049).